We begin with the raw amino-acid sequence, 268 residues long: MDRYQHLFQRLAAHNQGAFVPFVTIGDPNPQQSLRIMQTLVEAGADALELGIPFSDPLADGPTIQGAISALDSGTKPIRCFEADQAPIRAQDIPIYLLMYANLVYARGIDNFYQRCQQAGVDSVLIADVPTNESAEFGPAAKKYAIHPIFIAPPTASDETLQSVAELGSGYTYLLSRSGVTGAETKANMPVHALLERLNQFSAPPRRLGFGISEPEQVKQAIESGAAGAISGSAVVKIIEHHLAKPEAMLAELKTFVSAMKSATKHDK.

Residues Glu-49 and Asp-60 each act as proton acceptor in the active site.

This sequence belongs to the TrpA family. As to quaternary structure, tetramer of two alpha and two beta chains.

The catalysed reaction is (1S,2R)-1-C-(indol-3-yl)glycerol 3-phosphate + L-serine = D-glyceraldehyde 3-phosphate + L-tryptophan + H2O. Its pathway is amino-acid biosynthesis; L-tryptophan biosynthesis; L-tryptophan from chorismate: step 5/5. In terms of biological role, the alpha subunit is responsible for the aldol cleavage of indoleglycerol phosphate to indole and glyceraldehyde 3-phosphate. The polypeptide is Tryptophan synthase alpha chain (Vibrio metschnikovii).